Here is a 220-residue protein sequence, read N- to C-terminus: Deoxyribose-phosphate aldolase 2 (220 aa).

The active-site Proton donor/acceptor is D89. K151 acts as the Schiff-base intermediate with acetaldehyde in catalysis. K180 serves as the catalytic Proton donor/acceptor.

It belongs to the DeoC/FbaB aldolase family. DeoC type 1 subfamily.

It localises to the cytoplasm. It catalyses the reaction 2-deoxy-D-ribose 5-phosphate = D-glyceraldehyde 3-phosphate + acetaldehyde. It participates in carbohydrate degradation; 2-deoxy-D-ribose 1-phosphate degradation; D-glyceraldehyde 3-phosphate and acetaldehyde from 2-deoxy-alpha-D-ribose 1-phosphate: step 2/2. Functionally, catalyzes a reversible aldol reaction between acetaldehyde and D-glyceraldehyde 3-phosphate to generate 2-deoxy-D-ribose 5-phosphate. The sequence is that of Deoxyribose-phosphate aldolase 2 from Staphylococcus aureus (strain MSSA476).